A 426-amino-acid polypeptide reads, in one-letter code: Putative FBD-associated F-box protein At5g53635 (426 aa).

The F-box domain maps to 1 to 45 (MISQLPDPLICHILSHLPIKDLVTTRVLSTRWRSLWLWLPCLELN). The FBD domain occupies 353–405 (MIQFGSSLVPECLLSSLEFVDIRIPFRGHLEVMKLVRYFLENSAILKKLSLDH).

This chain is Putative FBD-associated F-box protein At5g53635, found in Arabidopsis thaliana (Mouse-ear cress).